Reading from the N-terminus, the 180-residue chain is Protein sll1483 (180 aa).

An N-terminal signal peptide occupies residues 1 to 26; sequence MKTAARIVAFTALTGFALGMPTVAMA. The region spanning 45–176 is the FAS1 domain; the sequence is AMTIVEVAAG…GVIHVIDQVI (132 aa).

In Synechocystis sp. (strain ATCC 27184 / PCC 6803 / Kazusa), this protein is Protein sll1483.